The primary structure comprises 409 residues: Astacin-like metalloendopeptidase (409 aa).

A signal peptide spans 1 to 19 (MDLKMLLIFIAFLLPSVLG). A compositionally biased stretch (low complexity) spans 30–39 (TATTESTQVT). The tract at residues 30–54 (TATTESTQVTTEEDIYDSPSPAETD) is disordered. In terms of domain architecture, Peptidase M12A spans 87-285 (SAINCRNCYW…AKINRLYNCS (199 aa)). 5 disulfide bridges follow: cysteine 91/cysteine 94, cysteine 134/cysteine 284, cysteine 155/cysteine 175, cysteine 287/cysteine 313, and cysteine 339/cysteine 362. Histidine 183 contributes to the Zn(2+) binding site. Glutamate 184 is an active-site residue. Positions 187 and 193 each coordinate Zn(2+). The 113-residue stretch at 287 to 399 (CSTIIDAAFG…SGFQATFTSA (113 aa)) folds into the CUB domain.

It depends on Zn(2+) as a cofactor. As to expression, expressed in ovary and gonads.

It is found in the cytoplasm. The protein localises to the cell membrane. It localises to the cytoplasmic vesicle. The protein resides in the secretory vesicle. Its subcellular location is the cortical granule. Its function is as follows. Probable oocyte-specific oolemmal receptor involved in sperm and egg adhesion and fertilization. May act as a protease. This is Astacin-like metalloendopeptidase (ASTL) from Gallus gallus (Chicken).